The chain runs to 541 residues: MLLKELAELAMRIASTSSRRDKVSLVSDLIRRSDPEEAYKALLILTGRIFPPSDPRELNVSWATLWKVVSSLSGAEPTGVDAGELVKSIVERRGKRQTALLEEPLTVEEVYKILEAISEAEGPGSKGKREALLTIPFSRADPSEAWLLANAIVGETRLGLNEGLLIESIAQAYGLRKEDVERAVMVLGDPYEIVRRGGKLEFEPVLFRPLKPMLAQSSDSLRSAIEELGRCALEYKLDGVRVQVHKRGDEVRFFSRRMSDITKSLPDVSDQVRYGVRAGEAILEGELIAERDGRPLPFQILIRRFKRRQLDPRLIEEIPLKLYIFDLILLDGSSYLRKPYFERREKLEGLIEDPVSLVRSLITSDPDEGMDFMEEALREGHEGVIAKKLNSPYIPGVRGRYWLKVKETNSLDLVIVAAERGYGRRHRWYSDYYLAARDPESGEFLIVGKTFKGLTDEEFEWITQKLEELSIGKEGKLIRVRPRIVVEVSFNEIQRSPKYKSGFALRFARITRIRDDKSPEEADTIERVREIYEKQIRKFQL.

Glutamate 234 provides a ligand contact to ATP. The N6-AMP-lysine intermediate role is filled by lysine 236. ATP contacts are provided by arginine 241, arginine 256, glutamate 286, phenylalanine 325, arginine 398, and lysine 404.

This sequence belongs to the ATP-dependent DNA ligase family. Mg(2+) is required as a cofactor.

The enzyme catalyses ATP + (deoxyribonucleotide)n-3'-hydroxyl + 5'-phospho-(deoxyribonucleotide)m = (deoxyribonucleotide)n+m + AMP + diphosphate.. Its function is as follows. DNA ligase that seals nicks in double-stranded DNA during DNA replication, DNA recombination and DNA repair. This Korarchaeum cryptofilum (strain OPF8) protein is DNA ligase 1.